Reading from the N-terminus, the 339-residue chain is Glycerol-3-phosphate dehydrogenase [NAD(P)+] (339 aa).

NADPH is bound by residues Ser-13, Trp-14, and Lys-108. 3 residues coordinate sn-glycerol 3-phosphate: Lys-108, Gly-139, and Ser-141. Ala-143 is an NADPH binding site. Positions 194, 247, 257, 258, and 259 each coordinate sn-glycerol 3-phosphate. The active-site Proton acceptor is the Lys-194. Residue Arg-258 participates in NADPH binding. 2 residues coordinate NADPH: Val-282 and Glu-284.

It belongs to the NAD-dependent glycerol-3-phosphate dehydrogenase family.

It is found in the cytoplasm. It catalyses the reaction sn-glycerol 3-phosphate + NAD(+) = dihydroxyacetone phosphate + NADH + H(+). The catalysed reaction is sn-glycerol 3-phosphate + NADP(+) = dihydroxyacetone phosphate + NADPH + H(+). It functions in the pathway membrane lipid metabolism; glycerophospholipid metabolism. Functionally, catalyzes the reduction of the glycolytic intermediate dihydroxyacetone phosphate (DHAP) to sn-glycerol 3-phosphate (G3P), the key precursor for phospholipid synthesis. This Streptococcus equi subsp. zooepidemicus (strain H70) protein is Glycerol-3-phosphate dehydrogenase [NAD(P)+].